Reading from the N-terminus, the 499-residue chain is Protein SENSITIVE TO PROTON RHIZOTOXICITY 1 (499 aa).

A disordered region spans residues 1-31; the sequence is METEDDLCNTNWGSSSSKSREPGSSDCGNST. The C2H2-type 1 zinc-finger motif lies at 244–266; sequence HFCTICGKGFKRDANLRMHMRGH. The C2H2-type 2; atypical zinc-finger motif lies at 354–385; sequence KHCGKNKWLCSCGTTFSRKDKLFGHIALFQGH. Residues 390 to 436 form a disordered region; it reads PLEETKPSASTSTQRGSSEGGNNNQGMVGFNLGSASNANQETTQPGM. Composition is skewed to polar residues over residues 396-415 and 422-435; these read PSASTSTQRGSSEGGNNNQG and GSASNANQETTQPG.

As to expression, expressed in roots (e.g. root tips and lateral roots), leaves, flowers (e.g. stigma, sepal, anther, and filament), stems, siliques and cotyledons.

Its subcellular location is the nucleus. Probable transcription factor. Together with STOP2, plays a critical role in tolerance to major stress factors in acid soils such as proton H(+) and aluminum ion Al(3+). Required for the expression of genes in response to acidic stress (e.g. ALMT1 and MATE), and Al-activated citrate exudation. The chain is Protein SENSITIVE TO PROTON RHIZOTOXICITY 1 from Arabidopsis thaliana (Mouse-ear cress).